A 405-amino-acid chain; its full sequence is Tryptophan synthase beta chain (405 aa).

N6-(pyridoxal phosphate)lysine is present on K95.

It belongs to the TrpB family. In terms of assembly, tetramer of two alpha and two beta chains. Requires pyridoxal 5'-phosphate as cofactor.

The catalysed reaction is (1S,2R)-1-C-(indol-3-yl)glycerol 3-phosphate + L-serine = D-glyceraldehyde 3-phosphate + L-tryptophan + H2O. The protein operates within amino-acid biosynthesis; L-tryptophan biosynthesis; L-tryptophan from chorismate: step 5/5. The beta subunit is responsible for the synthesis of L-tryptophan from indole and L-serine. The polypeptide is Tryptophan synthase beta chain (Pseudomonas putida (strain ATCC 47054 / DSM 6125 / CFBP 8728 / NCIMB 11950 / KT2440)).